Consider the following 77-residue polypeptide: Putative antitoxin VapB24 (77 aa).

Functionally, possibly the antitoxin component of a type II toxin-antitoxin (TA) system. Its cognate toxin is VapC24 (Potential). The protein is Putative antitoxin VapB24 (vapB24) of Mycobacterium tuberculosis (strain CDC 1551 / Oshkosh).